Here is a 1237-residue protein sequence, read N- to C-terminus: Phosphorylase b kinase regulatory subunit alpha, skeletal muscle isoform (1237 aa).

A phosphoserine mark is found at S629, S729, S735, and S758. The interval 810–840 (LTELYGKVGKIRHWGLIRYISGILRKKVEAL) is calmodulin-binding. S972 carries the phosphoserine; by autocatalysis modification. Position 981 is a phosphoserine (S981). A phosphoserine; by autocatalysis mark is found at S985 and S1007. Phosphoserine; by PKA is present on S1018. A phosphoserine mark is found at S1020, S1023, and S1030. The tract at residues 1021–1069 (TESQPNGGHSLGADLMSPSFLSPGTSVTPSSGSFPGHHTSKDSRQGQWQ) is disordered. The span at 1042–1056 (SPGTSVTPSSGSFPG) shows a compositional bias: low complexity. A calmodulin-binding region spans residues 1060 to 1100 (SKDSRQGQWQRRRRLDGALNRVPIGFYQKVWKVLQKCHGLS). Position 1127 is a phosphoserine (S1127). C1234 carries the S-farnesyl cysteine lipid modification.

It belongs to the phosphorylase b kinase regulatory chain family. Hexadecamer of 4 heterotetramers, each composed of alpha, beta, gamma, and delta subunits. Alpha (PHKA1 or PHKA2) and beta (PHKB) are regulatory subunits, gamma (PHKG1 or PHKG2) is the catalytic subunit, and delta is calmodulin. Phosphorylation of Ser-1018 by PKA stimulates the dephosphorylation of the beta subunit and, thus, reverses the initial stimulation of PHK by the faster beta-subunit phosphorylation by PKA, that occurs in muscle in response to adrenaline. In terms of processing, cys-1234 is farnesylated, but the C-terminal tripeptide is not removed and the cysteine carboxyl is not methylated. In terms of tissue distribution, isoform 1 predominates in muscle, heart, brain and testis. Isoforms 1 and 2 are expressed in similar quantities in the other tissues. Isoform 3 is highly expressed in slow muscle and heart.

The protein resides in the cell membrane. It functions in the pathway glycan biosynthesis; glycogen metabolism. Its activity is regulated as follows. By phosphorylation of various serine residues and by calcium. Functionally, phosphorylase b kinase catalyzes the phosphorylation of serine in certain substrates, including troponin I. The alpha chain may bind calmodulin. This chain is Phosphorylase b kinase regulatory subunit alpha, skeletal muscle isoform (PHKA1), found in Oryctolagus cuniculus (Rabbit).